We begin with the raw amino-acid sequence, 272 residues long: Tryptophan synthase alpha chain (272 aa).

Catalysis depends on proton acceptor residues Glu-49 and Glu-60.

The protein belongs to the TrpA family. In terms of assembly, tetramer of two alpha and two beta chains.

It catalyses the reaction (1S,2R)-1-C-(indol-3-yl)glycerol 3-phosphate + L-serine = D-glyceraldehyde 3-phosphate + L-tryptophan + H2O. It functions in the pathway amino-acid biosynthesis; L-tryptophan biosynthesis; L-tryptophan from chorismate: step 5/5. Functionally, the alpha subunit is responsible for the aldol cleavage of indoleglycerol phosphate to indole and glyceraldehyde 3-phosphate. This chain is Tryptophan synthase alpha chain, found in Legionella pneumophila (strain Paris).